Consider the following 499-residue polypeptide: Lysine--tRNA ligase (499 aa).

Residues E408 and E415 each contribute to the Mg(2+) site.

Belongs to the class-II aminoacyl-tRNA synthetase family. As to quaternary structure, homodimer. The cofactor is Mg(2+).

It localises to the cytoplasm. It carries out the reaction tRNA(Lys) + L-lysine + ATP = L-lysyl-tRNA(Lys) + AMP + diphosphate. The polypeptide is Lysine--tRNA ligase (Bacillus cereus (strain ATCC 10987 / NRS 248)).